Consider the following 72-residue polypeptide: Variant surface glycoprotein MITAT 1.1000BC (72 aa).

The GPI-anchor amidated aspartate moiety is linked to residue Asp50. The propeptide at 51–72 (GSFLVNKKFALMVYDFVSLLAF) is removed in mature form.

The protein localises to the cell membrane. VSG forms a coat on the surface of the parasite. The trypanosome evades the immune response of the host by expressing a series of antigenically distinct VSGs from an estimated 1000 VSG genes. The polypeptide is Variant surface glycoprotein MITAT 1.1000BC (Trypanosoma brucei brucei).